Here is a 538-residue protein sequence, read N- to C-terminus: Phosphoenolpyruvate carboxykinase (ATP) (538 aa).

Arginine 61, tyrosine 195, and lysine 201 together coordinate substrate. Residues lysine 201, histidine 220, and 236–244 contribute to the ATP site; that span reads GLSGTGKTT. Positions 201 and 220 each coordinate Mn(2+). Residue aspartate 257 coordinates Mn(2+). ATP-binding residues include glutamate 285, arginine 323, and threonine 449. Arginine 323 is a binding site for substrate.

It belongs to the phosphoenolpyruvate carboxykinase (ATP) family. It depends on Mn(2+) as a cofactor.

The protein localises to the cytoplasm. It carries out the reaction oxaloacetate + ATP = phosphoenolpyruvate + ADP + CO2. The protein operates within carbohydrate biosynthesis; gluconeogenesis. Functionally, involved in the gluconeogenesis. Catalyzes the conversion of oxaloacetate (OAA) to phosphoenolpyruvate (PEP) through direct phosphoryl transfer between the nucleoside triphosphate and OAA. The chain is Phosphoenolpyruvate carboxykinase (ATP) from Nitrobacter hamburgensis (strain DSM 10229 / NCIMB 13809 / X14).